Reading from the N-terminus, the 243-residue chain is uncharacterized protein (243 aa).

4 consecutive transmembrane segments (helical) span residues 38 to 58 (AYFL…VGIF), 99 to 119 (FGIA…FLGY), 143 to 163 (FYFS…FLVL), and 204 to 224 (AFAT…LGLF).

The protein resides in the cell membrane. This is an uncharacterized protein from Mycoplasma pneumoniae (strain ATCC 29342 / M129 / Subtype 1) (Mycoplasmoides pneumoniae).